The sequence spans 157 residues: S-ribosylhomocysteine lyase (157 aa).

Positions 54, 58, and 126 each coordinate Fe cation.

It belongs to the LuxS family. Homodimer. Fe cation serves as cofactor.

It carries out the reaction S-(5-deoxy-D-ribos-5-yl)-L-homocysteine = (S)-4,5-dihydroxypentane-2,3-dione + L-homocysteine. Its function is as follows. Involved in the synthesis of autoinducer 2 (AI-2) which is secreted by bacteria and is used to communicate both the cell density and the metabolic potential of the environment. The regulation of gene expression in response to changes in cell density is called quorum sensing. Catalyzes the transformation of S-ribosylhomocysteine (RHC) to homocysteine (HC) and 4,5-dihydroxy-2,3-pentadione (DPD). The protein is S-ribosylhomocysteine lyase of Bacillus cereus (strain G9842).